The chain runs to 180 residues: NAD(P)H-quinone oxidoreductase subunit I, chloroplastic (180 aa).

2 4Fe-4S ferredoxin-type domains span residues 55–84 (GRIH…VDWK) and 95–124 (LNYS…MTEE). 8 residues coordinate [4Fe-4S] cluster: cysteine 64, cysteine 67, cysteine 70, cysteine 74, cysteine 104, cysteine 107, cysteine 110, and cysteine 114.

The protein belongs to the complex I 23 kDa subunit family. NDH is composed of at least 16 different subunits, 5 of which are encoded in the nucleus. Requires [4Fe-4S] cluster as cofactor.

It localises to the plastid. The protein localises to the chloroplast thylakoid membrane. It carries out the reaction a plastoquinone + NADH + (n+1) H(+)(in) = a plastoquinol + NAD(+) + n H(+)(out). The enzyme catalyses a plastoquinone + NADPH + (n+1) H(+)(in) = a plastoquinol + NADP(+) + n H(+)(out). Its function is as follows. NDH shuttles electrons from NAD(P)H:plastoquinone, via FMN and iron-sulfur (Fe-S) centers, to quinones in the photosynthetic chain and possibly in a chloroplast respiratory chain. The immediate electron acceptor for the enzyme in this species is believed to be plastoquinone. Couples the redox reaction to proton translocation, and thus conserves the redox energy in a proton gradient. This is NAD(P)H-quinone oxidoreductase subunit I, chloroplastic from Ranunculus macranthus (Large buttercup).